Here is a 206-residue protein sequence, read N- to C-terminus: Proteasome subunit beta 1 (206 aa).

The propeptide at 1-5 (MLMKG) is removed in mature form; by autocatalysis. The active-site Nucleophile is the Thr-6.

This sequence belongs to the peptidase T1B family. In terms of assembly, the 20S proteasome core is composed of 14 alpha and 14 beta subunits that assemble into four stacked heptameric rings, resulting in a barrel-shaped structure. The two inner rings, each composed of seven catalytic beta subunits, are sandwiched by two outer rings, each composed of seven alpha subunits. The catalytic chamber with the active sites is on the inside of the barrel. Has a gated structure, the ends of the cylinder being occluded by the N-termini of the alpha-subunits. Is capped at one or both ends by the proteasome regulatory ATPase, PAN.

It localises to the cytoplasm. It carries out the reaction Cleavage of peptide bonds with very broad specificity.. The formation of the proteasomal ATPase PAN-20S proteasome complex, via the docking of the C-termini of PAN into the intersubunit pockets in the alpha-rings, triggers opening of the gate for substrate entry. Interconversion between the open-gate and close-gate conformations leads to a dynamic regulation of the 20S proteasome proteolysis activity. Component of the proteasome core, a large protease complex with broad specificity involved in protein degradation. The chain is Proteasome subunit beta 1 from Korarchaeum cryptofilum (strain OPF8).